We begin with the raw amino-acid sequence, 556 residues long: 2-succinyl-5-enolpyruvyl-6-hydroxy-3-cyclohexene-1-carboxylate synthase (556 aa).

This sequence belongs to the TPP enzyme family. MenD subfamily. Homodimer. Mg(2+) is required as a cofactor. Requires Mn(2+) as cofactor. The cofactor is thiamine diphosphate.

The catalysed reaction is isochorismate + 2-oxoglutarate + H(+) = 5-enolpyruvoyl-6-hydroxy-2-succinyl-cyclohex-3-ene-1-carboxylate + CO2. It functions in the pathway quinol/quinone metabolism; 1,4-dihydroxy-2-naphthoate biosynthesis; 1,4-dihydroxy-2-naphthoate from chorismate: step 2/7. The protein operates within quinol/quinone metabolism; menaquinone biosynthesis. In terms of biological role, catalyzes the thiamine diphosphate-dependent decarboxylation of 2-oxoglutarate and the subsequent addition of the resulting succinic semialdehyde-thiamine pyrophosphate anion to isochorismate to yield 2-succinyl-5-enolpyruvyl-6-hydroxy-3-cyclohexene-1-carboxylate (SEPHCHC). This is 2-succinyl-5-enolpyruvyl-6-hydroxy-3-cyclohexene-1-carboxylate synthase from Salmonella paratyphi B (strain ATCC BAA-1250 / SPB7).